Here is a 154-residue protein sequence, read N- to C-terminus: NADPH-dependent 7-cyano-7-deazaguanine reductase (154 aa).

The active-site Thioimide intermediate is cysteine 52. Catalysis depends on aspartate 59, which acts as the Proton donor. Substrate-binding positions include valine 74–serine 76 and histidine 93–glutamate 94.

It belongs to the GTP cyclohydrolase I family. QueF type 1 subfamily.

The protein resides in the cytoplasm. It carries out the reaction 7-aminomethyl-7-carbaguanine + 2 NADP(+) = 7-cyano-7-deazaguanine + 2 NADPH + 3 H(+). Its pathway is tRNA modification; tRNA-queuosine biosynthesis. In terms of biological role, catalyzes the NADPH-dependent reduction of 7-cyano-7-deazaguanine (preQ0) to 7-aminomethyl-7-deazaguanine (preQ1). The protein is NADPH-dependent 7-cyano-7-deazaguanine reductase of Paracoccus denitrificans (strain Pd 1222).